We begin with the raw amino-acid sequence, 306 residues long: Pantothenate kinase (306 aa).

91–98 provides a ligand contact to ATP; it reads GSVAVGKS.

Belongs to the prokaryotic pantothenate kinase family.

The protein localises to the cytoplasm. It carries out the reaction (R)-pantothenate + ATP = (R)-4'-phosphopantothenate + ADP + H(+). It functions in the pathway cofactor biosynthesis; coenzyme A biosynthesis; CoA from (R)-pantothenate: step 1/5. The polypeptide is Pantothenate kinase (Streptococcus equi subsp. equi (strain 4047)).